The primary structure comprises 235 residues: MGIGKSKINSCPLSLSWGKRHSVDTSPGYHESDSKKSEDLSLCNVAEHSNTTEGPTGKQEGAQSVEEMFEEEAEEEVFLKFVILHAEDDTDEALRVQNLLQDDFGIKPGIIFAEMPCGRQHLQNLDDAVNGSAWTILLLTENFLRDTWCNFQFYTSLMNSVNRQHKYNSVIPMRPLNNPLPRERTPFALQTINALEEESRGFPTQVERIFQESVYKTQQTIWKETRNMVQRQFIA.

The segment at 1-39 (MGIGKSKINSCPLSLSWGKRHSVDTSPGYHESDSKKSED) is disordered. G2 carries N-myristoyl glycine lipidation. S16 bears the Phosphoserine; by PKC/PRKCE mark. A compositionally biased stretch (basic and acidic residues) spans 30-39 (HESDSKKSED). Positions 73 to 229 (AEEEVFLKFV…TIWKETRNMV (157 aa)) constitute a TIR domain. Y167 is modified (phosphotyrosine).

As to quaternary structure, homodimer. Interacts with TLR4, TICAM1, IRF3 and IRF7 in response to LPS. Interacts with IL1R1, IL1RAP, IRAK2, IRAK3 and TRAF6. Interacts with protein kinase-inactive mutants of IRAK1 and IRAK4. Isoform 1 interacts with isoform 2; the interaction occurs in late endosomes and disrupts the interaction between isoform 1 and TICAM1. Interacts with MYD88; the interaction decreases after IL-18 stimulation in a time-dependent manner. Interacts with IL18R1 and IL18RAP. Interacts with TLR2. Interacts with RAB11FIP2. Post-translationally, phosphorylated by PRKCE in response to LPS. Phosphorylation is essential for its function. It is depleted from the membrane upon phosphorylation. Tyrosine phosphorylation is inhibited by phosphatase PTPN4. Isoform 1 is myristoylated. Required for membrane association which is critical for its ability to initiate efficient signaling. Expressed in spleen, prostate, testis, uterus, small intestine, colon, peripheral blood leukocytes, heart, placenta, lung, liver, skeletal muscle, and pancreas Isoform 2 is ubiquitously expressed (at lower levels than isoform 1).

It localises to the cytoplasm. Its subcellular location is the golgi apparatus. It is found in the cell membrane. The protein localises to the endoplasmic reticulum. The protein resides in the early endosome membrane. It localises to the late endosome membrane. Its subcellular location is the cell projection. It is found in the phagocytic cup. Its function is as follows. Functions as a sorting adapter in different signaling pathways to facilitate downstream signaling leading to type I interferon induction. In TLR4 signaling, physically bridges TLR4 and TICAM1 and functionally transmits signal to TICAM1 in early endosomes after endocytosis of TLR4. In TLR2 signaling, physically bridges TLR2 and MYD88 and is required for the TLR2-dependent movement of MYD88 to endosomes following ligand engagement. Involved in IL-18 signaling and is proposed to function as a sorting adapter for MYD88 in IL-18 signaling during adaptive immune response. Forms a complex with RAB11FIP2 that is recruited to the phagosomes to promote the activation of the actin-regulatory GTPases RAC1 and CDC42 and subsequent phagocytosis of Gram-negative bacteria. Proposed to inhibit LPS-TLR4 signaling at the late endosome by interaction with isoform 1 thereby disrupting the association of isoform 1 with TICAM1. May be involved in TLR4 degradation in late endosomes. In Homo sapiens (Human), this protein is TIR domain-containing adapter molecule 2 (TICAM2).